A 316-amino-acid chain; its full sequence is Probable cell division protein WhiA (316 aa).

Residues 275–309 constitute a DNA-binding region (H-T-H motif); it reads TLKELGEMVASGKISKSGINHRLRKLDEIAEQLRT.

This sequence belongs to the WhiA family.

It is found in the cytoplasm. The protein localises to the nucleoid. Involved in cell division and chromosome segregation. May influence the activity of FtsZ. Binds DNA, but does not seem to function as a transcription factor. This is Probable cell division protein WhiA from Bacillus subtilis (strain 168).